A 374-amino-acid chain; its full sequence is MKYLLPSAAAGLLLLAAQPTMAANTGGYATTDGGDVSGAVKKTARSLQEIVDIIEAAKKDSSGKVVKGGAFPLVITYNGNEDALIKAAEANICGQWSKDPRGVEIKEFTKGITILGTNGSSANFGIWVVNSSNVVVRNMRFGYMPGGAKDGDAIRIDNSPNVWIDHNEIFAKNFECAGTPDNDTTFESAVDIKKASTNVTVSYNFIHGVKKVGLSGSSNTDTGRNLTYHHNIYSDVNSRLPLQRGGQVHAYNNLYDGIKSSGFNVRQKGIALIESNWFENALNPVTARNDDSNFGTWELRNNNITSPSDFAKYKITWGKPSTPHINADDWKSTGKFPAVSYSYSPVSAQCVKDKLANYAGVGKNQAVLTAANCK.

Positions 1–22 (MKYLLPSAAAGLLLLAAQPTMA) are cleaved as a signal peptide. A disulfide bond links Cys93 and Cys176. Ca(2+) contacts are provided by Asp150, Asp152, Glu187, and Asp191. Residue Arg239 is part of the active site. The cysteines at positions 350 and 373 are disulfide-linked.

Belongs to the polysaccharide lyase 1 family. PLADES subfamily. Ca(2+) serves as cofactor.

The protein localises to the secreted. The enzyme catalyses Eliminative cleavage of (1-&gt;4)-alpha-D-galacturonan to give oligosaccharides with 4-deoxy-alpha-D-galact-4-enuronosyl groups at their non-reducing ends.. The protein operates within glycan metabolism; pectin degradation; 2-dehydro-3-deoxy-D-gluconate from pectin: step 2/5. In terms of biological role, involved in maceration and soft-rotting of plant tissue. This is Pectate lyase 1 (pel1) from Pectobacterium atrosepticum (strain SCRI 1043 / ATCC BAA-672) (Erwinia carotovora subsp. atroseptica).